We begin with the raw amino-acid sequence, 195 residues long: Thymidylate kinase (195 aa).

Residue 7–14 participates in ATP binding; it reads GIDGSGKT.

The protein belongs to the thymidylate kinase family.

It catalyses the reaction dTMP + ATP = dTDP + ADP. Functionally, phosphorylation of dTMP to form dTDP in both de novo and salvage pathways of dTTP synthesis. The chain is Thymidylate kinase (tmk) from Aquifex aeolicus (strain VF5).